We begin with the raw amino-acid sequence, 266 residues long: Thymidylate synthase (266 aa).

R24 is a binding site for dUMP. H54 is a binding site for (6R)-5,10-methylene-5,6,7,8-tetrahydrofolate. Residue 129–130 (RR) participates in dUMP binding. The Nucleophile role is filled by C149. DUMP is bound by residues 169 to 172 (RSAD), N180, and 210 to 212 (HIY). D172 serves as a coordination point for (6R)-5,10-methylene-5,6,7,8-tetrahydrofolate. Position 265 (A265) interacts with (6R)-5,10-methylene-5,6,7,8-tetrahydrofolate.

This sequence belongs to the thymidylate synthase family. Bacterial-type ThyA subfamily. As to quaternary structure, homodimer.

The protein resides in the cytoplasm. The catalysed reaction is dUMP + (6R)-5,10-methylene-5,6,7,8-tetrahydrofolate = 7,8-dihydrofolate + dTMP. It functions in the pathway pyrimidine metabolism; dTTP biosynthesis. Functionally, catalyzes the reductive methylation of 2'-deoxyuridine-5'-monophosphate (dUMP) to 2'-deoxythymidine-5'-monophosphate (dTMP) while utilizing 5,10-methylenetetrahydrofolate (mTHF) as the methyl donor and reductant in the reaction, yielding dihydrofolate (DHF) as a by-product. This enzymatic reaction provides an intracellular de novo source of dTMP, an essential precursor for DNA biosynthesis. In Mycobacterium leprae (strain TN), this protein is Thymidylate synthase.